A 1706-amino-acid polypeptide reads, in one-letter code: Cadherin-99C (1706 aa).

The first 28 residues, 1 to 28 (MAARNSLTPQQGLGFFGLLILLCSAVLG), serve as a signal peptide directing secretion. At 29–1395 (KSQMCEVETG…AIDNEVFPFT (1367 aa)) the chain is on the extracellular side. Cadherin domains lie at 68–142 (DPDT…APRF), 143–264 (MNTP…DPSF), 277–387 (INPE…PPVI), 388–500 (SSSQ…APKL), 519–604 (VTQV…PPRF), 605–704 (QKPI…NPEF), 707–807 (STLP…VPKF), 808–908 (SDAR…PPRF), 909–1005 (ITVP…RVDV), 1038–1148 (SDDS…APEF), and 1156–1270 (QQDT…ALSF). Asn105 and Asn188 each carry an N-linked (GlcNAc...) asparagine glycan. N-linked (GlcNAc...) asparagine glycans are attached at residues Asn442, Asn553, Asn620, and Asn753. Residues Asn1053, Asn1088, and Asn1108 are each glycosylated (N-linked (GlcNAc...) asparagine). N-linked (GlcNAc...) asparagine glycosylation is found at Asn1311 and Asn1367. A helical transmembrane segment spans residues 1396-1416 (LIAISLVILILGTIGIIYICI). The Cytoplasmic segment spans residues 1417–1706 (SWSKYKNFKQ…RSEVETTTEL (290 aa)).

As to quaternary structure, interacts (via the cytoplasmic domain) with ck. Interacts (via the cytoplasmic domain) with Cul1 and Ubr3.

The protein resides in the apical cell membrane. Its subcellular location is the endosome membrane. It is found in the cell projection. The protein localises to the microvillus membrane. Its function is as follows. Cadherin that functions in epithelial morphogenesis and the intestine epithelial immune response. Essential for female fertility. Regulates the length and organization of apical microvilli in developing follicle cells and salivary glands. Function in the follicle cell is essential for egg development as the microvilli secrete eggshell material such as the vitelline membrane. Acts at least in part by regulating the recruitment of the myosin ck to the follicle cell microvilli. Also required to regulate cell rearrangements during salivary tube elongation, possibly by modulating cellular adhesion between the apical surface and apical extracellular matrix during epithelial tube elongation. May also function in cellular adhesion during the development of other tubular epithelia such as the trachea. Possibly functions as an apical membrane determinant which acts in apical membrane expansion during salivary and tracheal epithelial tube elongation. In salivary gland development, this function is independent of the other apical membrane determinants crb and sas. Essential downstream component of a hh-signaling pathway which regulates the Duox-dependent gut epithelial immune response to bacterial uracil; required for endosome formation in the enterocyte and activating norpA-dependent Ca2+ mobilization, which are essential steps in the Duox-dependent production of reactive oxygen species (ROS) in response to intestinal bacterial infection. The chain is Cadherin-99C from Drosophila melanogaster (Fruit fly).